A 743-amino-acid chain; its full sequence is ABC-type transporter claG (743 aa).

N-linked (GlcNAc...) asparagine glycans are attached at residues Asn4 and Asn30. A helical transmembrane segment spans residues 124 to 144; sequence SILLDIFLVIVVSWPFPFAWI. A glycan (N-linked (GlcNAc...) asparagine) is linked at Asn159. In terms of domain architecture, ABC transporter spans 200–439; it reads VEFSGISMRP…FQDAGYTFPL (240 aa). 234-241 provides a ligand contact to ATP; sequence GPSGSGKS. The next 5 helical transmembrane spans lie at 507 to 527, 560 to 580, 611 to 631, 636 to 656, and 661 to 681; these read YPSF…IGLS, GMLL…KTFG, IFLS…PIVS, LIVN…ISAI, and NGPL…GCAP.

It belongs to the ABC transporter superfamily. ABCG family.

Its subcellular location is the membrane. Its function is as follows. ABC-type transporter; part of the cla gene cluster that produces clavatol and ortho-quinone methide. The clavatol biosynthesis cluster cla and the terrestric acid cluster tra are both involved in the production of peniphenones and penilactones. This Penicillium crustosum (Blue mold fungus) protein is ABC-type transporter claG.